A 244-amino-acid chain; its full sequence is ATP-dependent dethiobiotin synthetase BioD 1 (244 aa).

Residue 12 to 17 (NVGKTV) participates in ATP binding. A Mg(2+)-binding site is contributed by Thr-16. Lys-37 is an active-site residue. Asp-68 contacts ATP. The Mg(2+) site is built by Asp-68 and Glu-126. ATP-binding positions include 186 to 187 (NR), 215 to 217 (PYL), and Glu-222.

It belongs to the dethiobiotin synthetase family. Homodimer. Requires Mg(2+) as cofactor.

Its subcellular location is the cytoplasm. It carries out the reaction (7R,8S)-7,8-diammoniononanoate + CO2 + ATP = (4R,5S)-dethiobiotin + ADP + phosphate + 3 H(+). The protein operates within cofactor biosynthesis; biotin biosynthesis; biotin from 7,8-diaminononanoate: step 1/2. Functionally, catalyzes a mechanistically unusual reaction, the ATP-dependent insertion of CO2 between the N7 and N8 nitrogen atoms of 7,8-diaminopelargonic acid (DAPA, also called 7,8-diammoniononanoate) to form a ureido ring. This is ATP-dependent dethiobiotin synthetase BioD 1 from Pasteurella multocida (strain Pm70).